The following is a 356-amino-acid chain: GTPase Obg (356 aa).

Residues 1 to 159 enclose the Obg domain; the sequence is MKFLDEAKVY…RWIWLRMKLI (159 aa). One can recognise an OBG-type G domain in the interval 160–327; that stretch reads ADAGLVGLPN…ALRKLADVVG (168 aa). Residues 166–173, 191–195, 212–215, 279–282, and 308–310 each bind GTP; these read GLPNAGKS, FTTLH, DIPG, NKID, and SGA. The Mg(2+) site is built by Ser173 and Thr193. The tract at residues 327 to 356 is disordered; sequence GEQPVSSKAKNAVESAATEEPWAAPVPPQG.

Belongs to the TRAFAC class OBG-HflX-like GTPase superfamily. OBG GTPase family. In terms of assembly, monomer. Requires Mg(2+) as cofactor.

It is found in the cytoplasm. Its function is as follows. An essential GTPase which binds GTP, GDP and possibly (p)ppGpp with moderate affinity, with high nucleotide exchange rates and a fairly low GTP hydrolysis rate. Plays a role in control of the cell cycle, stress response, ribosome biogenesis and in those bacteria that undergo differentiation, in morphogenesis control. This is GTPase Obg from Bradyrhizobium sp. (strain ORS 278).